Here is a 156-residue protein sequence, read N- to C-terminus: ADP-ribosylation factor-like protein 2-binding protein (156 aa).

It belongs to the ARL2BP family.

Its subcellular location is the cytoplasm. It is found in the mitochondrion intermembrane space. The protein resides in the cytoskeleton. It localises to the microtubule organizing center. The protein localises to the centrosome. Its subcellular location is the nucleus. It is found in the spindle. The protein resides in the cilium basal body. Its function is as follows. Plays a role as an effector of the ADP-ribosylation factor-like protein 2, ARL2. This Xenopus laevis (African clawed frog) protein is ADP-ribosylation factor-like protein 2-binding protein (arl2bp).